Here is a 142-residue protein sequence, read N- to C-terminus: Organic hydroperoxide resistance protein-like 2 (142 aa).

Belongs to the OsmC/Ohr family.

This chain is Organic hydroperoxide resistance protein-like 2, found in Staphylococcus saprophyticus subsp. saprophyticus (strain ATCC 15305 / DSM 20229 / NCIMB 8711 / NCTC 7292 / S-41).